The following is a 233-amino-acid chain: Gamma-interferon-responsive lysosomal thiol protein (233 aa).

An N-terminal signal peptide occupies residues 1-26 (MVSSSLTKLVFFGCLLLLTFTDNLVA). A disulfide bridge links cysteine 42 with cysteine 45. N-linked (GlcNAc...) asparagine glycans are attached at residues asparagine 80 and asparagine 207. The propeptide at 200–233 (TTLPKVCNSSASMSKSPERKWKLQVSYANKATNY) is removed in mature form.

The protein belongs to the GILT family. As to quaternary structure, dimer; disulfide-linked. In terms of tissue distribution, expressed in the outer integument of seed coat.

The protein resides in the secreted. It localises to the lysosome. In terms of biological role, lysosomal thiol reductase that can reduce protein disulfide bonds. May facilitate the complete unfolding of proteins destined for lysosomal degradation. The sequence is that of Gamma-interferon-responsive lysosomal thiol protein from Arabidopsis thaliana (Mouse-ear cress).